A 509-amino-acid chain; its full sequence is Activin receptor type-1 (509 aa).

The signal sequence occupies residues 1–20; the sequence is MVDGAMILSVLMMMALPSPS. The Extracellular segment spans residues 21–123; that stretch reads MEDEEPKVNP…FPGSQNFHLE (103 aa). Asparagine 102 carries N-linked (GlcNAc...) asparagine glycosylation. A helical membrane pass occupies residues 124–146; it reads VGLIILSVVFAVCLFACILGVAL. The Cytoplasmic portion of the chain corresponds to 147-509; sequence RKFKRRNQER…NSLDKLKTDC (363 aa). Positions 178 to 207 constitute a GS domain; that stretch reads STLAELLDHSCTSGSGSGLPFLVQRTVARQ. One can recognise a Protein kinase domain in the interval 208-502; the sequence is ITLLECVGKG…KTLTKIDNSL (295 aa). Residues 214 to 222 and lysine 235 each bind ATP; that span reads VGKGRYGEV. The Proton acceptor role is filled by aspartate 336. At serine 501 the chain carries Phosphoserine.

It belongs to the protein kinase superfamily. TKL Ser/Thr protein kinase family. TGFB receptor subfamily. Interacts with FKBP1A. Interacts with FCHO1. Interacts with CLU. Interacts with type II receptors AMHR2 and ACVR2A. Interacts with BMP7. Interacts with GDF2/BMP9. Interacts with BMP6 (when glycosylated); the interaction may induce HAMP expression. Interacts with TSC22D1/TSC-22. The cofactor is Mg(2+). Requires Mn(2+) as cofactor. As to expression, urogenital ridge, testis, ovary, brain and lungs.

It is found in the membrane. The catalysed reaction is L-threonyl-[receptor-protein] + ATP = O-phospho-L-threonyl-[receptor-protein] + ADP + H(+). It catalyses the reaction L-seryl-[receptor-protein] + ATP = O-phospho-L-seryl-[receptor-protein] + ADP + H(+). Functionally, bone morphogenetic protein (BMP) type I receptor that is involved in a wide variety of biological processes, including bone, heart, cartilage, nervous, and reproductive system development and regulation. As a type I receptor, forms heterotetrameric receptor complexes with the type II receptors AMHR2, ACVR2A ors ACVR2B. Upon binding of ligands such as BMP7 or GDF2/BMP9 to the heteromeric complexes, type II receptors transphosphorylate ACVR1 intracellular domain. In turn, ACVR1 kinase domain is activated and subsequently phosphorylates SMAD1/5/8 proteins that transduce the signal. In addition to its role in mediating BMP pathway-specific signaling, suppresses TGFbeta/activin pathway signaling by interfering with the binding of activin to its type II receptor. Besides canonical SMAD signaling, can activate non-canonical pathways such as p38 mitogen-activated protein kinases/MAPKs. May promote the expression of HAMP, potentially via its interaction with BMP6. This chain is Activin receptor type-1 (Acvr1), found in Rattus norvegicus (Rat).